We begin with the raw amino-acid sequence, 317 residues long: Putative 2-hydroxyacid dehydrogenase SAOUHSC_02577 (317 aa).

NAD(+) is bound by residues 155–156, 234–236, and Asp260; these read EI and ASR. Residue Arg236 is part of the active site. Residue Glu265 is part of the active site. His283 (proton donor) is an active-site residue. Residue 283-286 coordinates NAD(+); sequence HIGN.

The protein belongs to the D-isomer specific 2-hydroxyacid dehydrogenase family.

In Staphylococcus aureus (strain NCTC 8325 / PS 47), this protein is Putative 2-hydroxyacid dehydrogenase SAOUHSC_02577.